Here is a 251-residue protein sequence, read N- to C-terminus: HTH-type transcriptional regulator IolR (251 aa).

An HTH deoR-type domain is found at 1 to 57 (MKLMRIQEMEEYILSHGTVSLDELCQVFNVSKNTVRRDINKLTEKGAIEKVYGGVTS). Positions 19–38 (VSLDELCQVFNVSKNTVRRD) form a DNA-binding region, H-T-H motif.

Its function is as follows. Iol operon repressor. The chain is HTH-type transcriptional regulator IolR (iolR) from Bacillus subtilis (strain 168).